The chain runs to 71 residues: Exodeoxyribonuclease 7 small subunit (71 aa).

It belongs to the XseB family. In terms of assembly, heterooligomer composed of large and small subunits.

The protein localises to the cytoplasm. The catalysed reaction is Exonucleolytic cleavage in either 5'- to 3'- or 3'- to 5'-direction to yield nucleoside 5'-phosphates.. In terms of biological role, bidirectionally degrades single-stranded DNA into large acid-insoluble oligonucleotides, which are then degraded further into small acid-soluble oligonucleotides. The chain is Exodeoxyribonuclease 7 small subunit from Endomicrobium trichonymphae.